The primary structure comprises 810 residues: DNA replication licensing factor mcm-6 (810 aa).

The MCM domain maps to 346-553 (IEKNIVDSLF…VTDYAIARRI (208 aa)). Positions 400, 401, 402, 403, 404, and 505 each coordinate ATP. Residues 529–532 (SRFD) carry the Arginine finger motif. The ADP site is built by arginine 622 and glutamate 625. The interval 685 to 705 (KENQGGDDDMEHDGEKDETAK) is disordered.

This sequence belongs to the MCM family. In terms of assembly, component of the mcm2-7 complex. The complex forms a toroidal hexameric ring with the proposed subunit order mcm2-mcm6-mcm4-mcm7-mcm3-mcm5 (By simililarity).

Its subcellular location is the nucleus. It catalyses the reaction ATP + H2O = ADP + phosphate + H(+). Its function is as follows. Acts as a component of the MCM2-7 complex (MCM complex) which is the replicative helicase essential for 'once per cell cycle' DNA replication initiation and elongation in eukaryotic cells. Core component of CDC45-MCM-GINS (CMG) helicase, the molecular machine that unwinds template DNA during replication, and around which the replisome is built. The active ATPase sites in the MCM2-7 ring are formed through the interaction surfaces of two neighboring subunits such that a critical structure of a conserved arginine finger motif is provided in trans relative to the ATP-binding site of the Walker A box of the adjacent subunit. The six ATPase active sites, however, are likely to contribute differentially to the complex helicase activity. The sequence is that of DNA replication licensing factor mcm-6 from Caenorhabditis briggsae.